The following is a 364-amino-acid chain: Capsular polysaccharide phosphotransferase cps1A (364 aa).

The protein belongs to the stealth family.

Part of a capsular polysaccharide synthesis locus. The protein is Capsular polysaccharide phosphotransferase cps1A (cps1A) of Actinobacillus pleuropneumoniae (Haemophilus pleuropneumoniae).